The chain runs to 355 residues: Poly(3-hydroxyalkanoate) polymerase subunit PhaC (355 aa).

The AB hydrolase-1 domain maps to 69-334; sequence PLLIVYALVN…LAFPGGHIGI (266 aa). Cysteine 149 is an active-site residue.

It belongs to the PHA/PHB synthase family. Type III PhaC subfamily. As to quaternary structure, a large complex of PhaC and PhaE; the ratio of the subunits has been estimated to be from 1:1 to 4:1, with more PhaE than PhaC.

The protein resides in the cytoplasm. It carries out the reaction (3R)-3-hydroxybutanoyl-CoA + [(3R)-hydroxybutanoate](n) = [(3R)-hydroxybutanoate](n+1) + CoA. It functions in the pathway biopolymer metabolism; poly-(R)-3-hydroxybutanoate biosynthesis. Polymerizes D(-)-3-hydroxybutyryl-CoA to create polyhydroxybutyrate (PHB) which consists of thousands of hydroxybutyrate molecules linked end to end. This subunit has catalytic activity that is enhanced 100-fold by PhaE, the non-catalytic subunit. The protein is Poly(3-hydroxyalkanoate) polymerase subunit PhaC of Allochromatium vinosum (strain ATCC 17899 / DSM 180 / NBRC 103801 / NCIMB 10441 / D) (Chromatium vinosum).